We begin with the raw amino-acid sequence, 252 residues long: Protein lin-28 homolog B (252 aa).

A disordered region spans residues 1 to 30 (MAEGGAARGTREEQGKLPEQEEEEEEDPQV). Residues 9–19 (GTREEQGKLPE) show a composition bias toward basic and acidic residues. One can recognise a CSD domain in the interval 32 to 105 (LGSGHCKWFN…GFESLRVTGP (74 aa)). 2 consecutive CCHC-type zinc fingers follow at residues 130–147 (DRCY…ECNL) and 152–169 (KKCH…NCPH). 8 residues coordinate Zn(2+): C132, C135, H140, C145, C154, C157, H162, and C167. The tract at residues 172–252 (VPQHPTTSQG…KGPSVQKKKK (81 aa)) is disordered. Residues 213 to 222 (GRSELSERSS) show a composition bias toward basic and acidic residues. Over residues 225–238 (PQEASLSKISTSPE) the composition is skewed to polar residues.

This sequence belongs to the lin-28 family.

The protein resides in the nucleus. It is found in the nucleolus. In terms of biological role, suppressor of specific microRNA (miRNA) biogenesis. Binds target primary miRNA transcripts and sequester them in the nucleolus, away from the microprocessor complex, hence preventing their processing into mature miRNA. The specific interaction with target pri-miRNAs occurs via an 5'-GGAG-3' motif in the pre-miRNA terminal loop. The chain is Protein lin-28 homolog B (lin28b) from Xenopus laevis (African clawed frog).